The primary structure comprises 65 residues: Large ribosomal subunit protein uL29 (65 aa).

It belongs to the universal ribosomal protein uL29 family.

This Delftia acidovorans (strain DSM 14801 / SPH-1) protein is Large ribosomal subunit protein uL29.